Consider the following 475-residue polypeptide: Sulfate adenylyltransferase subunit 1 (475 aa).

The 215-residue stretch at 25–239 folds into the tr-type G domain; that stretch reads KSLLRFLTCG…EVLETVEIQR (215 aa). The interval 34 to 41 is G1; the sequence is GSVDDGKS. 34-41 lines the GTP pocket; the sequence is GSVDDGKS. The segment at 92–96 is G2; that stretch reads GITID. The interval 113 to 116 is G3; sequence DTPG. Residues 113 to 117 and 168 to 171 each bind GTP; these read DTPGH and NKMD. The tract at residues 168 to 171 is G4; it reads NKMD. Residues 206-208 are G5; it reads SAL.

Belongs to the TRAFAC class translation factor GTPase superfamily. Classic translation factor GTPase family. CysN/NodQ subfamily. In terms of assembly, heterodimer composed of CysD, the smaller subunit, and CysN.

It catalyses the reaction sulfate + ATP + H(+) = adenosine 5'-phosphosulfate + diphosphate. The protein operates within sulfur metabolism; hydrogen sulfide biosynthesis; sulfite from sulfate: step 1/3. With CysD forms the ATP sulfurylase (ATPS) that catalyzes the adenylation of sulfate producing adenosine 5'-phosphosulfate (APS) and diphosphate, the first enzymatic step in sulfur assimilation pathway. APS synthesis involves the formation of a high-energy phosphoric-sulfuric acid anhydride bond driven by GTP hydrolysis by CysN coupled to ATP hydrolysis by CysD. The protein is Sulfate adenylyltransferase subunit 1 of Citrobacter koseri (strain ATCC BAA-895 / CDC 4225-83 / SGSC4696).